The sequence spans 303 residues: Aspartate carbamoyltransferase catalytic subunit (303 aa).

The carbamoyl phosphate site is built by Arg51 and Thr52. Lys80 contributes to the L-aspartate binding site. Carbamoyl phosphate is bound by residues Arg101, His129, and Gln132. L-aspartate contacts are provided by Arg162 and Arg221. The carbamoyl phosphate site is built by Leu260 and Pro261.

This sequence belongs to the aspartate/ornithine carbamoyltransferase superfamily. ATCase family. Heterooligomer of catalytic and regulatory chains.

The enzyme catalyses carbamoyl phosphate + L-aspartate = N-carbamoyl-L-aspartate + phosphate + H(+). It participates in pyrimidine metabolism; UMP biosynthesis via de novo pathway; (S)-dihydroorotate from bicarbonate: step 2/3. Functionally, catalyzes the condensation of carbamoyl phosphate and aspartate to form carbamoyl aspartate and inorganic phosphate, the committed step in the de novo pyrimidine nucleotide biosynthesis pathway. This chain is Aspartate carbamoyltransferase catalytic subunit, found in Saccharolobus islandicus (strain M.14.25 / Kamchatka #1) (Sulfolobus islandicus).